The sequence spans 587 residues: Inorganic phosphate transporter 2-1, chloroplastic (587 aa).

Residues 1–71 (MTLPYRFSSV…VCPLASFSSY (71 aa)) constitute a chloroplast transit peptide. Positions 74 to 106 (SEGEEQHHADQPIQNPHESSTVSNESDGKGNAE) are disordered. The span at 85–98 (PIQNPHESSTVSNE) shows a compositional bias: polar residues. 12 consecutive transmembrane segments (helical) span residues 127–147 (AISI…KSLG), 154–174 (TKLL…NIGA), 195–215 (AVMT…THVT), 233–253 (MLLF…LQVA), 265–285 (CIVG…AVFW), 289–309 (AKVA…SFLV), 327–347 (AAAA…SAAL), 352–372 (IFPI…IVFD), 413–433 (LEIV…FMSF), 465–485 (IVIP…GLTM), 523–543 (LGLP…VGFA), and 559–579 (ASWL…TWIF).

This sequence belongs to the inorganic phosphate transporter (PiT) (TC 2.A.20.2) family. In terms of tissue distribution, mostly expressed in young green tissues. Present in both auto- and heterotrophic tissues. Also expressed in root stele.

The protein localises to the plastid. It localises to the chloroplast inner membrane. In terms of biological role, low affinity H(+)/Pi chloroplastic cotransporter. Involved in inorganic phosphate (orthophosphate, Pi) uptake in green parts of plants in Pi-sufficient conditions. Required for Pi retranslocation during Pi deprivation. This Arabidopsis thaliana (Mouse-ear cress) protein is Inorganic phosphate transporter 2-1, chloroplastic (PHT2-1).